The chain runs to 462 residues: Probable peptidoglycan glycosyltransferase FtsW (462 aa).

Residues 1-63 (MGCIVCSDGI…VRDGRKFDAP (63 aa)) lie on the Cytoplasmic side of the membrane. Residues 64–84 (LLWMVVLMTAFGLLMIYSASV) traverse the membrane as a helical segment. Topologically, residues 85–97 (YLASKEGGDQFFY) are periplasmic. The helical transmembrane segment at 98–118 (LTRQAGFVVAGLIASGFLWFL) threads the bilayer. The Cytoplasmic segment spans residues 119-125 (CRMRTWR). Residues 126-146 (RLVPWIFALSGLLLVAVLIAG) traverse the membrane as a helical segment. The Periplasmic segment spans residues 147–160 (REINGATRWIPLGP). A helical membrane pass occupies residues 161-181 (LNFQPTELFKLAVILYLASLF). Residues 182 to 227 (TRREEVLRSMESLGWQSIWRGTANLIMSATNPQARRETLEMYGRFR) are Cytoplasmic-facing. The next 2 membrane-spanning stretches (helical) occupy residues 228-248 (AIILPIMLVAFGLVLIMVQPD) and 249-269 (FGSFVVITVITVGMLFLAGLP). Residues 270–271 (WK) are Cytoplasmic-facing. Residues 272 to 292 (YFFVLVGSVLGGMVLMITAAP) form a helical membrane-spanning segment. The Periplasmic segment spans residues 293-348 (YRVQRVVAFLDPWKDPQGAGYQLTHSLMAIGRGEWFGMGLGASLSKRGFLPEAHTD). Residues 349 to 369 (FIFAIIAEEFGFFGMCVLIFC) traverse the membrane as a helical segment. Over 370 to 386 (YGWLVVRAFSIGKQSRD) the chain is Cytoplasmic. A helical transmembrane segment spans residues 387–409 (LGLTFNAYIASGIGIWIGIQSFF). Over 410-424 (NIGVNIGALPTKGLT) the chain is Periplasmic. A helical transmembrane segment spans residues 425-445 (LPLMSYGGSSVFFMLISMMLL). Topologically, residues 446-462 (LRIDYENRRKMRGYRVE) are cytoplasmic.

This sequence belongs to the SEDS family. FtsW subfamily.

Its subcellular location is the cell inner membrane. It carries out the reaction [GlcNAc-(1-&gt;4)-Mur2Ac(oyl-L-Ala-gamma-D-Glu-L-Lys-D-Ala-D-Ala)](n)-di-trans,octa-cis-undecaprenyl diphosphate + beta-D-GlcNAc-(1-&gt;4)-Mur2Ac(oyl-L-Ala-gamma-D-Glu-L-Lys-D-Ala-D-Ala)-di-trans,octa-cis-undecaprenyl diphosphate = [GlcNAc-(1-&gt;4)-Mur2Ac(oyl-L-Ala-gamma-D-Glu-L-Lys-D-Ala-D-Ala)](n+1)-di-trans,octa-cis-undecaprenyl diphosphate + di-trans,octa-cis-undecaprenyl diphosphate + H(+). It participates in cell wall biogenesis; peptidoglycan biosynthesis. Its function is as follows. Peptidoglycan polymerase that is essential for cell division. This Neisseria gonorrhoeae (strain NCCP11945) protein is Probable peptidoglycan glycosyltransferase FtsW.